We begin with the raw amino-acid sequence, 766 residues long: Subtilisin-like protease SBT3.13 (766 aa).

The signal sequence occupies residues 1 to 21 (MNNSLQSSKLVLLLAIALVLF). The propeptide at 22–120 (LNTELDFLTA…VIPNRIRKLK (99 aa)) is activation peptide. The Inhibitor I9 domain occupies 41 to 119 (VYIVYLGERE…HVIPNRIRKL (79 aa)). Positions 134 to 618 (PTSFSSLSSV…GGLVNPEKAA (485 aa)) constitute a Peptidase S8 domain. Residue Asp-162 is the Charge relay system of the active site. Residues Asn-195 and Asn-223 are each glycosylated (N-linked (GlcNAc...) asparagine). The active-site Charge relay system is His-239. N-linked (GlcNAc...) asparagine glycosylation is found at Asn-254 and Asn-389. Residue Ser-549 is the Charge relay system of the active site. N-linked (GlcNAc...) asparagine glycosylation is present at Asn-641.

The protein belongs to the peptidase S8 family.

The protein resides in the secreted. The sequence is that of Subtilisin-like protease SBT3.13 from Arabidopsis thaliana (Mouse-ear cress).